The following is a 464-amino-acid chain: Molybdate transporter 2 (464 aa).

The Tonoplast targeting signal motif lies at 8–9 (LL). Transmembrane regions (helical) follow at residues 33 to 53 (LSGAVGDLGTFIPIVLTLTLV), 62 to 82 (LIFTGFYNIATGLLFDIPMPV), 116 to 136 (LLLGATGAMSFLYNIIPLPVV), 172 to 192 (IWLGLDGLILALAALLFIILS), 223 to 243 (LLSSIPSALIVFALGLVLCFI), 309 to 329 (VSISVGVMNLIGCWFGAMPVC), 348 to 368 (SVIFLGIGKLIVGLVFGNSFV), 374 to 394 (FPIGILGVLLLFAGIELAMAS), and 404 to 424 (FIMLVCAAVSMTGSSAALGFG).

Belongs to the SLC26A/SulP transporter (TC 2.A.53) family. In terms of tissue distribution, expressed in leaves. Not detected in roots, shoots and seeds.

It is found in the vacuole membrane. In terms of biological role, molybdate transporter required for vacuolar molybdate export during senescence. This chain is Molybdate transporter 2 (MOT2), found in Arabidopsis thaliana (Mouse-ear cress).